Here is a 429-residue protein sequence, read N- to C-terminus: Enolase (429 aa).

Gln-164 serves as a coordination point for (2R)-2-phosphoglycerate. Glu-206 acts as the Proton donor in catalysis. Positions 243, 286, and 313 each coordinate Mg(2+). Residues Lys-338, Arg-367, Ser-368, and Lys-389 each coordinate (2R)-2-phosphoglycerate. The Proton acceptor role is filled by Lys-338.

This sequence belongs to the enolase family. The cofactor is Mg(2+).

The protein resides in the cytoplasm. Its subcellular location is the secreted. The protein localises to the cell surface. The enzyme catalyses (2R)-2-phosphoglycerate = phosphoenolpyruvate + H2O. The protein operates within carbohydrate degradation; glycolysis; pyruvate from D-glyceraldehyde 3-phosphate: step 4/5. Catalyzes the reversible conversion of 2-phosphoglycerate (2-PG) into phosphoenolpyruvate (PEP). It is essential for the degradation of carbohydrates via glycolysis. The protein is Enolase of Thermosipho africanus (strain TCF52B).